A 188-amino-acid chain; its full sequence is ATP synthase subunit b 1 (188 aa).

A helical transmembrane segment spans residues 35-55; it reads VHFGSHLFWLAISFGLFYLFI.

The protein belongs to the ATPase B chain family. In terms of assembly, F-type ATPases have 2 components, F(1) - the catalytic core - and F(0) - the membrane proton channel. F(1) has five subunits: alpha(3), beta(3), gamma(1), delta(1), epsilon(1). F(0) has three main subunits: a(1), b(2) and c(10-14). The alpha and beta chains form an alternating ring which encloses part of the gamma chain. F(1) is attached to F(0) by a central stalk formed by the gamma and epsilon chains, while a peripheral stalk is formed by the delta and b chains.

The protein resides in the cell inner membrane. Its function is as follows. F(1)F(0) ATP synthase produces ATP from ADP in the presence of a proton or sodium gradient. F-type ATPases consist of two structural domains, F(1) containing the extramembraneous catalytic core and F(0) containing the membrane proton channel, linked together by a central stalk and a peripheral stalk. During catalysis, ATP synthesis in the catalytic domain of F(1) is coupled via a rotary mechanism of the central stalk subunits to proton translocation. Component of the F(0) channel, it forms part of the peripheral stalk, linking F(1) to F(0). The polypeptide is ATP synthase subunit b 1 (Bartonella henselae (strain ATCC 49882 / DSM 28221 / CCUG 30454 / Houston 1) (Rochalimaea henselae)).